The following is a 250-amino-acid chain: HTH-type transcriptional regulator SarS (250 aa).

DNA-binding regions (H-T-H motif) lie at residues 53 to 76 (FKKI…VLVK) and 177 to 200 (LKDL…NLKK).

This sequence belongs to the SarA family.

Its subcellular location is the cytoplasm. Transcriptional regulator that controls expression of some virulence factors in a cell density-dependent manner. The sequence is that of HTH-type transcriptional regulator SarS (sarS) from Staphylococcus aureus (strain MRSA252).